The following is a 154-amino-acid chain: Transcriptional repressor NrdR (154 aa).

The tract at residues 1–22 (MECPNCHKNASRVIDSRPSDEN) is disordered. A zinc finger lies at 3-34 (CPNCHKNASRVIDSRPSDENRAIRRRRECENC). Residues 49–139 (LLVVKNDGTR…IYRQFKDVSG (91 aa)) enclose the ATP-cone domain.

Belongs to the NrdR family. Zn(2+) is required as a cofactor.

Its function is as follows. Negatively regulates transcription of bacterial ribonucleotide reductase nrd genes and operons by binding to NrdR-boxes. This chain is Transcriptional repressor NrdR, found in Lactobacillus johnsonii (strain CNCM I-12250 / La1 / NCC 533).